The sequence spans 90 residues: Small ribosomal subunit protein bS16 (90 aa).

This sequence belongs to the bacterial ribosomal protein bS16 family.

This Brevibacillus brevis (strain 47 / JCM 6285 / NBRC 100599) protein is Small ribosomal subunit protein bS16.